The following is a 198-amino-acid chain: Inosine triphosphate pyrophosphatase (198 aa).

At Ala2 the chain carries N-acetylalanine. 14–19 (TGNAKK) contacts ITP. Mg(2+) is bound at residue Glu44. Residues Lys56, 72–73 (DT), and Lys89 each bind ITP. Ser146 carries the post-translational modification Phosphoserine. ITP is bound by residues 149–152 (FGWD), Lys172, and 177–178 (HR).

The protein belongs to the HAM1 NTPase family. As to quaternary structure, homodimer. Mg(2+) serves as cofactor. The cofactor is Mn(2+).

The protein localises to the cytoplasm. It carries out the reaction ITP + H2O = IMP + diphosphate + H(+). The enzyme catalyses dITP + H2O = dIMP + diphosphate + H(+). The catalysed reaction is XTP + H2O = XMP + diphosphate + H(+). It catalyses the reaction N(6)-hydroxy-dATP + H2O = N(6)-hydroxy-dAMP + diphosphate + H(+). Pyrophosphatase that hydrolyzes the non-canonical purine nucleotides inosine triphosphate (ITP), deoxyinosine triphosphate (dITP) as well as 2'-deoxy-N-6-hydroxylaminopurine triphosphate (dHAPTP) and xanthosine 5'-triphosphate (XTP) to their respective monophosphate derivatives. The enzyme does not distinguish between the deoxy- and ribose forms. Probably excludes non-canonical purines from RNA and DNA precursor pools, thus preventing their incorporation into RNA and DNA and avoiding chromosomal lesions. This is Inosine triphosphate pyrophosphatase (Itpa) from Mus musculus (Mouse).